We begin with the raw amino-acid sequence, 257 residues long: 7-carboxy-7-deazaguanine synthase (257 aa).

Substrate is bound by residues 29–31 (LQG) and Arg44. In terms of domain architecture, Radical SAM core spans 35-253 (LAGTPSVFVR…PRLHVALWND (219 aa)). The [4Fe-4S] cluster site is built by Cys48, Cys52, and Cys55. Position 57 (Ser57) interacts with Mg(2+). Thr90 is a binding site for substrate. Gly92 provides a ligand contact to S-adenosyl-L-methionine. The disordered stretch occupies residues 133–153 (VSPKLASSTPTAETDPKGDGE).

The protein belongs to the radical SAM superfamily. 7-carboxy-7-deazaguanine synthase family. Homodimer. It depends on [4Fe-4S] cluster as a cofactor. Requires S-adenosyl-L-methionine as cofactor. Mg(2+) is required as a cofactor.

The enzyme catalyses 6-carboxy-5,6,7,8-tetrahydropterin + H(+) = 7-carboxy-7-deazaguanine + NH4(+). Its pathway is purine metabolism; 7-cyano-7-deazaguanine biosynthesis. Catalyzes the complex heterocyclic radical-mediated conversion of 6-carboxy-5,6,7,8-tetrahydropterin (CPH4) to 7-carboxy-7-deazaguanine (CDG), a step common to the biosynthetic pathways of all 7-deazapurine-containing compounds. This chain is 7-carboxy-7-deazaguanine synthase, found in Halobacterium salinarum (strain ATCC 29341 / DSM 671 / R1).